We begin with the raw amino-acid sequence, 481 residues long: Probable glycine dehydrogenase (decarboxylating) subunit 2 (481 aa).

The residue at position 269 (K269) is an N6-(pyridoxal phosphate)lysine.

It belongs to the GcvP family. C-terminal subunit subfamily. In terms of assembly, the glycine cleavage system is composed of four proteins: P, T, L and H. In this organism, the P 'protein' is a heterodimer of two subunits. Requires pyridoxal 5'-phosphate as cofactor.

The catalysed reaction is N(6)-[(R)-lipoyl]-L-lysyl-[glycine-cleavage complex H protein] + glycine + H(+) = N(6)-[(R)-S(8)-aminomethyldihydrolipoyl]-L-lysyl-[glycine-cleavage complex H protein] + CO2. In terms of biological role, the glycine cleavage system catalyzes the degradation of glycine. The P protein binds the alpha-amino group of glycine through its pyridoxal phosphate cofactor; CO(2) is released and the remaining methylamine moiety is then transferred to the lipoamide cofactor of the H protein. The sequence is that of Probable glycine dehydrogenase (decarboxylating) subunit 2 from Chlorobium chlorochromatii (strain CaD3).